The sequence spans 365 residues: Peptide chain release factor 2 (365 aa).

N5-methylglutamine is present on Q252.

This sequence belongs to the prokaryotic/mitochondrial release factor family. Methylated by PrmC. Methylation increases the termination efficiency of RF2.

It is found in the cytoplasm. Its function is as follows. Peptide chain release factor 2 directs the termination of translation in response to the peptide chain termination codons UGA and UAA. This Shewanella baltica (strain OS223) protein is Peptide chain release factor 2.